Reading from the N-terminus, the 565-residue chain is Membrane protein insertase YidC (565 aa).

6 consecutive transmembrane segments (helical) span residues 6 to 26, 348 to 368, 370 to 390, 437 to 457, 479 to 499, and 516 to 536; these read VLLI…WSKN, LMAL…SLLH, WGWA…PLSA, GGCF…WVLV, PYFI…KLTP, and PLIF…YWVI.

The protein belongs to the OXA1/ALB3/YidC family. Type 1 subfamily. As to quaternary structure, interacts with the Sec translocase complex via SecD. Specifically interacts with transmembrane segments of nascent integral membrane proteins during membrane integration.

It localises to the cell inner membrane. Its function is as follows. Required for the insertion and/or proper folding and/or complex formation of integral membrane proteins into the membrane. Involved in integration of membrane proteins that insert both dependently and independently of the Sec translocase complex, as well as at least some lipoproteins. Aids folding of multispanning membrane proteins. In Xylella fastidiosa (strain M23), this protein is Membrane protein insertase YidC.